The following is a 611-amino-acid chain: Major facilitator superfamily domain-containing protein YCR023C (611 aa).

The Extracellular segment spans residues 1–89 (MARQKLTFKE…GRFSEKHGRK (89 aa)). A helical transmembrane segment spans residues 90 to 110 (ITLTCGLIGTSVSLLILGFSR). Over 111-152 (NFYQALVARSLMGLLNGNVGVIRTIIGEIATERKHQALAFST) the chain is Cytoplasmic. Residues 153–173 (MPLLFQFGAVVGPMIGGFLVF) traverse the membrane as a helical segment. Residues 174-199 (RDGTMNEVPLWFPHFAKRIIRSYPYA) are Extracellular-facing. The helical transmembrane segment at 200–220 (LPNVVVCMFLMFGLTNATLFL) threads the bilayer. Over 221–353 (EETHPAFKDR…SIFHHVFHTK (133 aa)) the chain is Cytoplasmic. Residues 261–271 (DDSENIHHRNE) show a composition bias toward basic and acidic residues. A disordered region spans residues 261-301 (DDSENIHHRNENVNSIRGQDSEEDENSPLVNTTNDDDTESI). Position 313 is a phosphoserine (S313). Residues 354 to 372 (VFYPISVNFIMALHLIVYN) form a helical membrane-spanning segment. The Extracellular portion of the chain corresponds to 373 to 413 (EFLPVFLAYDLAVDPENPKKLASKFPWKISGGIGYEPEQTG). The chain crosses the membrane as a helical span at residues 414 to 434 (TLLSTTGIFGCFVVIFIFPIV). Residues 435–442 (DRNFDCLT) are Cytoplasmic-facing. Residues 443–463 (IFRTLVKLYPIMYVMVPYVVF) form a helical membrane-spanning segment. Residues 464–542 (LQNERIPSWY…YIMSWSQQND (79 aa)) are Extracellular-facing. A helical membrane pass occupies residues 543–563 (VAWVSWWSLSLFCMVALYQSY). Over 564–611 (KIAPIDDNENELHGQGSEDAYNSQSQSSDLRMAHRSSLSSLSNQRCTT) the chain is Cytoplasmic. S603 is modified (phosphoserine).

This sequence belongs to the major facilitator superfamily.

The protein resides in the membrane. The catalysed reaction is chloride(in) = chloride(out). In terms of biological role, outward-rectifying chloride channel involved in chloride homeostasis. This is Major facilitator superfamily domain-containing protein YCR023C from Saccharomyces cerevisiae (strain ATCC 204508 / S288c) (Baker's yeast).